The primary structure comprises 372 residues: Lipid-A-disaccharide synthase (372 aa).

This sequence belongs to the LpxB family.

The catalysed reaction is a lipid X + a UDP-2-N,3-O-bis[(3R)-3-hydroxyacyl]-alpha-D-glucosamine = a lipid A disaccharide + UDP + H(+). It participates in bacterial outer membrane biogenesis; LPS lipid A biosynthesis. Its function is as follows. Condensation of UDP-2,3-diacylglucosamine and 2,3-diacylglucosamine-1-phosphate to form lipid A disaccharide, a precursor of lipid A, a phosphorylated glycolipid that anchors the lipopolysaccharide to the outer membrane of the cell. In Thiobacillus denitrificans (strain ATCC 25259 / T1), this protein is Lipid-A-disaccharide synthase.